Consider the following 59-residue polypeptide: Large ribosomal subunit protein uL30 (59 aa).

The protein belongs to the universal ribosomal protein uL30 family. Part of the 50S ribosomal subunit.

This is Large ribosomal subunit protein uL30 from Aliivibrio salmonicida (strain LFI1238) (Vibrio salmonicida (strain LFI1238)).